Here is a 392-residue protein sequence, read N- to C-terminus: Formate-dependent phosphoribosylglycinamide formyltransferase (392 aa).

N(1)-(5-phospho-beta-D-ribosyl)glycinamide-binding positions include glutamate 22–leucine 23 and glutamate 82. ATP contacts are provided by residues arginine 114, lysine 155, serine 160–glutamine 165, glutamate 195–valine 198, and glutamate 203. The ATP-grasp domain occupies arginine 119–leucine 308. The Mg(2+) site is built by glutamate 267 and glutamate 279. Residues aspartate 286, lysine 355, and arginine 362–arginine 363 each bind N(1)-(5-phospho-beta-D-ribosyl)glycinamide.

This sequence belongs to the PurK/PurT family. As to quaternary structure, homodimer.

The enzyme catalyses N(1)-(5-phospho-beta-D-ribosyl)glycinamide + formate + ATP = N(2)-formyl-N(1)-(5-phospho-beta-D-ribosyl)glycinamide + ADP + phosphate + H(+). The protein operates within purine metabolism; IMP biosynthesis via de novo pathway; N(2)-formyl-N(1)-(5-phospho-D-ribosyl)glycinamide from N(1)-(5-phospho-D-ribosyl)glycinamide (formate route): step 1/1. Functionally, involved in the de novo purine biosynthesis. Catalyzes the transfer of formate to 5-phospho-ribosyl-glycinamide (GAR), producing 5-phospho-ribosyl-N-formylglycinamide (FGAR). Formate is provided by PurU via hydrolysis of 10-formyl-tetrahydrofolate. This Salmonella paratyphi A (strain ATCC 9150 / SARB42) protein is Formate-dependent phosphoribosylglycinamide formyltransferase.